Consider the following 209-residue polypeptide: uncharacterized protein (209 aa).

The FCP1 homology domain maps to 1–199 (MQVFLDLDET…DELKRVTASL (199 aa)).

This is an uncharacterized protein from Dryophytes versicolor (chameleon treefrog).